The following is a 369-amino-acid chain: UPF0324 membrane protein DVU_0543 (369 aa).

The next 9 helical transmembrane spans lie at I13–V31, W46–F65, G110–G132, T142–V164, L171–G193, W240–G262, T269–A291, L306–I328, and L341–I363.

The protein belongs to the UPF0324 family.

It localises to the cell membrane. This Nitratidesulfovibrio vulgaris (strain ATCC 29579 / DSM 644 / CCUG 34227 / NCIMB 8303 / VKM B-1760 / Hildenborough) (Desulfovibrio vulgaris) protein is UPF0324 membrane protein DVU_0543.